We begin with the raw amino-acid sequence, 166 residues long: NAD(P)H-quinone oxidoreductase subunit I, chloroplastic (166 aa).

4Fe-4S ferredoxin-type domains follow at residues 55–84 and 95–124; these read GRIH…VDWK and LNYS…MTEE. Positions 64, 67, 70, 74, 104, 107, 110, and 114 each coordinate [4Fe-4S] cluster.

Belongs to the complex I 23 kDa subunit family. In terms of assembly, NDH is composed of at least 16 different subunits, 5 of which are encoded in the nucleus. The cofactor is [4Fe-4S] cluster.

The protein localises to the plastid. The protein resides in the chloroplast thylakoid membrane. The catalysed reaction is a plastoquinone + NADH + (n+1) H(+)(in) = a plastoquinol + NAD(+) + n H(+)(out). It carries out the reaction a plastoquinone + NADPH + (n+1) H(+)(in) = a plastoquinol + NADP(+) + n H(+)(out). In terms of biological role, NDH shuttles electrons from NAD(P)H:plastoquinone, via FMN and iron-sulfur (Fe-S) centers, to quinones in the photosynthetic chain and possibly in a chloroplast respiratory chain. The immediate electron acceptor for the enzyme in this species is believed to be plastoquinone. Couples the redox reaction to proton translocation, and thus conserves the redox energy in a proton gradient. The sequence is that of NAD(P)H-quinone oxidoreductase subunit I, chloroplastic from Oblivia mikanioides (Salmea mikanioides).